The sequence spans 209 residues: Small ribosomal subunit protein uS4 (209 aa).

Residues 98–159 (RRLDSAVYRL…KSRKITRIND (62 aa)) form the S4 RNA-binding domain.

This sequence belongs to the universal ribosomal protein uS4 family. As to quaternary structure, part of the 30S ribosomal subunit. Contacts protein S5. The interaction surface between S4 and S5 is involved in control of translational fidelity.

In terms of biological role, one of the primary rRNA binding proteins, it binds directly to 16S rRNA where it nucleates assembly of the body of the 30S subunit. Functionally, with S5 and S12 plays an important role in translational accuracy. The protein is Small ribosomal subunit protein uS4 of Syntrophotalea carbinolica (strain DSM 2380 / NBRC 103641 / GraBd1) (Pelobacter carbinolicus).